Reading from the N-terminus, the 156-residue chain is Ribosomal RNA large subunit methyltransferase H (156 aa).

Residues leucine 72, glycine 103, and 122–127 contribute to the S-adenosyl-L-methionine site; that span reads LSSLTL.

It belongs to the RNA methyltransferase RlmH family. In terms of assembly, homodimer.

The protein resides in the cytoplasm. It catalyses the reaction pseudouridine(1915) in 23S rRNA + S-adenosyl-L-methionine = N(3)-methylpseudouridine(1915) in 23S rRNA + S-adenosyl-L-homocysteine + H(+). Specifically methylates the pseudouridine at position 1915 (m3Psi1915) in 23S rRNA. This Dechloromonas aromatica (strain RCB) protein is Ribosomal RNA large subunit methyltransferase H.